The chain runs to 380 residues: O-phospho-L-seryl-tRNA:Cys-tRNA synthase (380 aa).

Residues 86 to 87, asparagine 192, and 215 to 217 each bind pyridoxal 5'-phosphate; these read AR and SGH. An N6-(pyridoxal phosphate)lysine modification is found at lysine 218.

It belongs to the SepCysS family. As to quaternary structure, homodimer. Interacts with SepRS. Requires pyridoxal 5'-phosphate as cofactor.

The enzyme catalyses O-phospho-L-seryl-tRNA(Cys) + hydrogen sulfide + H(+) = L-cysteinyl-tRNA(Cys) + phosphate. Its function is as follows. Converts O-phospho-L-seryl-tRNA(Cys) (Sep-tRNA(Cys)) to L-cysteinyl-tRNA(Cys) (Cys-tRNA(Cys)). The polypeptide is O-phospho-L-seryl-tRNA:Cys-tRNA synthase (Methanococcus maripaludis (strain DSM 14266 / JCM 13030 / NBRC 101832 / S2 / LL)).